The following is a 390-amino-acid chain: Flap endonuclease 1-2 (390 aa).

The tract at residues 1–108 (MGIHQLMQFL…GELARRKKLK (108 aa)) is N-domain. Aspartate 34 lines the Mg(2+) pocket. Arginine 74 contributes to the DNA binding site. The Mg(2+) site is built by aspartate 90, glutamate 162, glutamate 164, aspartate 183, and aspartate 185. The segment at 126–254 (QALLQNQRTT…GTAYKLIKEY (129 aa)) is I-domain. DNA is bound at residue glutamate 162. DNA is bound by residues glycine 232 and aspartate 234. Residue aspartate 234 participates in Mg(2+) binding. The interval 348-356 (FQSRLENFF) is interaction with PCNA. Residues 359-390 (TTKIIHPNNSKAKAKSNKKTEQPQKSGGKKKI) form a disordered region.

It belongs to the XPG/RAD2 endonuclease family. FEN1 subfamily. Interacts with PCNA. Three molecules of FEN1 bind to one PCNA trimer with each molecule binding to one PCNA monomer. PCNA stimulates the nuclease activity without altering cleavage specificity. Requires Mg(2+) as cofactor. Post-translationally, phosphorylated. Phosphorylation upon DNA damage induces relocalization to the nuclear plasma.

Its subcellular location is the nucleus. The protein localises to the nucleolus. It localises to the nucleoplasm. The protein resides in the mitochondrion. In terms of biological role, structure-specific nuclease with 5'-flap endonuclease and 5'-3' exonuclease activities involved in DNA replication and repair. During DNA replication, cleaves the 5'-overhanging flap structure that is generated by displacement synthesis when DNA polymerase encounters the 5'-end of a downstream Okazaki fragment. It enters the flap from the 5'-end and then tracks to cleave the flap base, leaving a nick for ligation. Also involved in the long patch base excision repair (LP-BER) pathway, by cleaving within the apurinic/apyrimidinic (AP) site-terminated flap. Acts as a genome stabilization factor that prevents flaps from equilibrating into structures that lead to duplications and deletions. Also possesses 5'-3' exonuclease activity on nicked or gapped double-stranded DNA, and exhibits RNase H activity. Also involved in replication and repair of rDNA and in repairing mitochondrial DNA. The protein is Flap endonuclease 1-2 of Paramecium tetraurelia.